Consider the following 332-residue polypeptide: Anthranilate phosphoribosyltransferase (332 aa).

Residues glycine 79, 82–83 (GD), serine 87, 89–92 (NIST), 107–115 (KHGNRSVSS), and serine 119 contribute to the 5-phospho-alpha-D-ribose 1-diphosphate site. Anthranilate is bound at residue glycine 79. Serine 91 serves as a coordination point for Mg(2+). Anthranilate is bound at residue asparagine 110. Position 165 (arginine 165) interacts with anthranilate. Mg(2+) is bound by residues aspartate 223 and glutamate 224.

The protein belongs to the anthranilate phosphoribosyltransferase family. In terms of assembly, homodimer. The cofactor is Mg(2+).

The catalysed reaction is N-(5-phospho-beta-D-ribosyl)anthranilate + diphosphate = 5-phospho-alpha-D-ribose 1-diphosphate + anthranilate. Its pathway is amino-acid biosynthesis; L-tryptophan biosynthesis; L-tryptophan from chorismate: step 2/5. In terms of biological role, catalyzes the transfer of the phosphoribosyl group of 5-phosphorylribose-1-pyrophosphate (PRPP) to anthranilate to yield N-(5'-phosphoribosyl)-anthranilate (PRA). The protein is Anthranilate phosphoribosyltransferase of Sodalis glossinidius (strain morsitans).